Reading from the N-terminus, the 423-residue chain is Transmembrane protease serine 11E (423 aa).

The Cytoplasmic portion of the chain corresponds to 1-18 (MYRSCVVRARKRTCVEPW). A helical; Signal-anchor for type II membrane protein membrane pass occupies residues 19 to 39 (VIGIISFLSLIVLAVCIGLTV). The Extracellular segment spans residues 40 to 423 (HYVRYNHRRT…RHWIASNTGI (384 aa)). The 119-residue stretch at 48-166 (RTYNYYSTLS…ESVKIKKINK (119 aa)) folds into the SEA domain. N-linked (GlcNAc...) asparagine glycans are attached at residues Asn74, Asn165, Asn182, and Asn223. 4 disulfides stabilise this stretch: Cys176–Cys297, Cys217–Cys233, Cys342–Cys358, and Cys369–Cys398. One can recognise a Peptidase S1 domain in the interval 192–422 (IVGGTPVEEE…FRHWIASNTG (231 aa)). Residues His232 and Asp277 each act as charge relay system in the active site. The active-site Charge relay system is the Ser373.

This sequence belongs to the peptidase S1 family. As to quaternary structure, forms a heterodimer with SERPINA5 and SERPINE1. Post-translationally, N-glycosylated. Expressed in epidermal, oral and male reproductive tissues.

It localises to the cell membrane. It is found in the secreted. Inhibited by SERPINA5. In terms of biological role, serine protease which possesses both gelatinolytic and caseinolytic activities. Shows a preference for Arg in the P1 position. The chain is Transmembrane protease serine 11E (Tmprss11e) from Mus musculus (Mouse).